Consider the following 100-residue polypeptide: Large ribosomal subunit protein uL23 (100 aa).

This sequence belongs to the universal ribosomal protein uL23 family. Part of the 50S ribosomal subunit. Contacts protein L29, and trigger factor when it is bound to the ribosome.

Its function is as follows. One of the early assembly proteins it binds 23S rRNA. One of the proteins that surrounds the polypeptide exit tunnel on the outside of the ribosome. Forms the main docking site for trigger factor binding to the ribosome. This Yersinia enterocolitica serotype O:8 / biotype 1B (strain NCTC 13174 / 8081) protein is Large ribosomal subunit protein uL23.